The sequence spans 498 residues: Elastase (498 aa).

An N-terminal signal peptide occupies residues 1–23 (MKKVSTLDLLFVAIMGVSPAAFA). Positions 24–197 (ADLIDVSKLP…VLDQWEGLAH (174 aa)) are excised as a propeptide. Cys-227 and Cys-255 form a disulfide bridge. Asp-333 contributes to the Ca(2+) binding site. His-337 lines the Zn(2+) pocket. Residue Glu-338 is part of the active site. Residues His-341 and Glu-361 each contribute to the Zn(2+) site. Residues Glu-369, Glu-372, Asp-380, and Leu-382 each coordinate Ca(2+). The Proton donor role is filled by His-420. Cys-467 and Cys-494 are joined by a disulfide.

This sequence belongs to the peptidase M4 family. As to quaternary structure, monomer. Requires Ca(2+) as cofactor. Zn(2+) is required as a cofactor. Post-translationally, made as a membrane-associated pre-pro-protein, which is exported to the periplasm (yielding pro-elastase) with removal of the signal peptide. Under certain conditions pro-elastase can accumulate. The pro-peptide is removed in the periplasm yielding a (mature length) 33 kDa protein, probably by autocatalysis. The pro-peptide probably remains associated with elastase and can be secreted. Further alterations (perhaps processing) seems to be required before secretion into the extracellular space.

The protein resides in the secreted. The catalysed reaction is Hydrolysis of proteins including elastin, collagen types III and IV, fibronectin and immunoglobulin A, generally with bulky hydrophobic group at P1'. Insulin B chain cleavage pattern identical to that of thermolysin, but specificity differs in other respects.. With respect to regulation, inhibited by phosphoramidon. Its function is as follows. Cleaves host elastin, collagen, IgG, and several complement components as well as endogenous pro-aminopeptidase. Autocatalyses processing of its pro-peptide. Processes the pro-peptide of pro-chitin-binding protein (cbpD). Involved in the pathogenesis of P.aeruginosa infections. In Pseudomonas aeruginosa (strain ATCC 15692 / DSM 22644 / CIP 104116 / JCM 14847 / LMG 12228 / 1C / PRS 101 / PAO1), this protein is Elastase (lasB).